A 721-amino-acid chain; its full sequence is Polyribonucleotide nucleotidyltransferase (721 aa).

Asp-486 and Asp-492 together coordinate Mg(2+). The region spanning 553 to 612 (PKIVQLQIDIDKISLVIGSTGKTVKAITDEFEVKVQIEQNGKIILFGDDDFKMQKAKERI) is the KH domain. One can recognise an S1 motif domain in the interval 622–716 (GEIYEGIVKK…KFGKIDLEVV (95 aa)).

This sequence belongs to the polyribonucleotide nucleotidyltransferase family. The cofactor is Mg(2+).

Its subcellular location is the cytoplasm. The catalysed reaction is RNA(n+1) + phosphate = RNA(n) + a ribonucleoside 5'-diphosphate. Involved in mRNA degradation. Catalyzes the phosphorolysis of single-stranded polyribonucleotides processively in the 3'- to 5'-direction. The sequence is that of Polyribonucleotide nucleotidyltransferase from Borrelia garinii subsp. bavariensis (strain ATCC BAA-2496 / DSM 23469 / PBi) (Borreliella bavariensis).